Consider the following 156-residue polypeptide: Guanine deaminase (156 aa).

In terms of domain architecture, CMP/dCMP-type deaminase spans M1–F132. Zn(2+) is bound at residue H53. E55 acts as the Proton donor in catalysis. Zn(2+) contacts are provided by C83 and C86.

This sequence belongs to the cytidine and deoxycytidylate deaminase family. The cofactor is Zn(2+).

It catalyses the reaction guanine + H2O + H(+) = xanthine + NH4(+). It functions in the pathway purine metabolism; guanine degradation; xanthine from guanine: step 1/1. Its function is as follows. Catalyzes the hydrolytic deamination of guanine, producing xanthine and ammonia. This is Guanine deaminase (guaD) from Bacillus subtilis (strain 168).